Consider the following 117-residue polypeptide: uncharacterized protein (117 aa).

The protein localises to the plastid. Its subcellular location is the chloroplast. This is an uncharacterized protein from Chlamydomonas reinhardtii (Chlamydomonas smithii).